The sequence spans 74 residues: Large ribosomal subunit protein bL31 (74 aa).

Zn(2+) contacts are provided by cysteine 16, cysteine 18, cysteine 37, and cysteine 40.

It belongs to the bacterial ribosomal protein bL31 family. Type A subfamily. In terms of assembly, part of the 50S ribosomal subunit. The cofactor is Zn(2+).

Its function is as follows. Binds the 23S rRNA. The chain is Large ribosomal subunit protein bL31 from Nitrosomonas europaea (strain ATCC 19718 / CIP 103999 / KCTC 2705 / NBRC 14298).